The following is a 467-amino-acid chain: ATP synthase subunit beta (467 aa).

Position 152 to 159 (152 to 159 (GGAGVGKT)) interacts with ATP.

The protein belongs to the ATPase alpha/beta chains family. As to quaternary structure, F-type ATPases have 2 components, CF(1) - the catalytic core - and CF(0) - the membrane proton channel. CF(1) has five subunits: alpha(3), beta(3), gamma(1), delta(1), epsilon(1). CF(0) has three main subunits: a(1), b(2) and c(9-12). The alpha and beta chains form an alternating ring which encloses part of the gamma chain. CF(1) is attached to CF(0) by a central stalk formed by the gamma and epsilon chains, while a peripheral stalk is formed by the delta and b chains.

The protein localises to the cell inner membrane. It catalyses the reaction ATP + H2O + 4 H(+)(in) = ADP + phosphate + 5 H(+)(out). In terms of biological role, produces ATP from ADP in the presence of a proton gradient across the membrane. The catalytic sites are hosted primarily by the beta subunits. The polypeptide is ATP synthase subunit beta (Wolinella succinogenes (strain ATCC 29543 / DSM 1740 / CCUG 13145 / JCM 31913 / LMG 7466 / NCTC 11488 / FDC 602W) (Vibrio succinogenes)).